We begin with the raw amino-acid sequence, 393 residues long: 2-nitroimidazole transporter (393 aa).

At 1–12 the chain is on the cytoplasmic side; sequence MTCSTSLSGKNR. Residues 13 to 33 form a helical membrane-spanning segment; it reads IVLIAGILMIATTLRVTFTGA. At 34–52 the chain is on the periplasmic side; it reads APLLDTIRSAYSLTTAQTG. The helical transmembrane segment at 53-73 threads the bilayer; sequence LLTTLPLLAFALISPLAAPVA. Residues 74-80 lie on the Cytoplasmic side of the membrane; sequence RRFGMER. Helical transmembrane passes span 81–101 and 102–122; these read SLFA…LPSP and YLLF…NVLL. The Cytoplasmic segment spans residues 123–140; that stretch reads PGLIKRDFPHSVARLTGA. Residues 141–161 form a helical membrane-spanning segment; sequence YSLTMGAAAALGSAMVVPLAL. At 162–163 the chain is on the periplasmic side; the sequence is NG. A helical transmembrane segment spans residues 164–184; it reads FGWQGALLMLMCFPLLALFLW. The Cytoplasmic portion of the chain corresponds to 185-218; that stretch reads LPQWRSQQHANLSTSRALHTRGIWRSPLAWQVTL. The chain crosses the membrane as a helical span at residues 219–239; it reads FLGINSLVYYVIIGWLPAILI. The Periplasmic portion of the chain corresponds to 240–249; the sequence is SHGYSEAQAG. Residues 250–270 traverse the membrane as a helical segment; the sequence is SLHGLLQLATAAPGLLIPLFL. Over 271–278 the chain is Cytoplasmic; that stretch reads HHVKDQRG. The helical transmembrane segment at 279-299 threads the bilayer; that stretch reads IAAFVALMCAVGAVGLCFMPA. The Periplasmic portion of the chain corresponds to 300–304; the sequence is HAITW. Residues 305–325 form a helical membrane-spanning segment; it reads TLLFGFGSGATMILGLTFIGL. The Cytoplasmic segment spans residues 326 to 334; it reads RASSAHQAA. Residues 335–355 traverse the membrane as a helical segment; that stretch reads ALSGMAQSVGYLLAACGPPLM. Residues 356–366 are Periplasmic-facing; that stretch reads GKIHDANGNWS. The chain crosses the membrane as a helical span at residues 367 to 387; sequence VPLMGVAILSLLMAIFGLCAG. Over 388 to 393 the chain is Cytoplasmic; it reads RDKEIR.

The protein belongs to the major facilitator superfamily. Cyanate porter (TC 2.A.1.17) family.

It is found in the cell inner membrane. Involved in efflux of 2-nitroimidazole. The sequence is that of 2-nitroimidazole transporter from Escherichia coli (strain K12).